Reading from the N-terminus, the 382-residue chain is S-adenosylmethionine synthase (382 aa).

Mg(2+) is bound at residue glutamate 10. Histidine 16 serves as a coordination point for ATP. A K(+)-binding site is contributed by glutamate 44. L-methionine-binding residues include glutamate 57 and glutamine 100. ATP contacts are provided by residues 166–168, 234–237, aspartate 245, 251–252, alanine 268, lysine 272, and lysine 276; these read DTK, SGRF, and RK. Aspartate 245 lines the L-methionine pocket. Lysine 276 contributes to the L-methionine binding site.

The protein belongs to the AdoMet synthase family. It depends on Mg(2+) as a cofactor. The cofactor is K(+).

The enzyme catalyses L-methionine + ATP + H2O = S-adenosyl-L-methionine + phosphate + diphosphate. It functions in the pathway amino-acid biosynthesis; S-adenosyl-L-methionine biosynthesis; S-adenosyl-L-methionine from L-methionine: step 1/1. In terms of biological role, catalyzes the formation of S-adenosylmethionine from methionine and ATP. The reaction comprises two steps that are both catalyzed by the same enzyme: formation of S-adenosylmethionine (AdoMet) and triphosphate, and subsequent hydrolysis of the triphosphate. The protein is S-adenosylmethionine synthase (sam1) of Schizosaccharomyces pombe (strain 972 / ATCC 24843) (Fission yeast).